A 554-amino-acid polypeptide reads, in one-letter code: Probable oligo-1,6-glucosidase 3 (554 aa).

Asp199 serves as the catalytic Nucleophile. Glu256 (proton donor) is an active-site residue.

It belongs to the glycosyl hydrolase 13 family.

It localises to the cytoplasm. It carries out the reaction Hydrolysis of (1-&gt;6)-alpha-D-glucosidic linkages in some oligosaccharides produced from starch and glycogen by alpha-amylase, and in isomaltose.. The sequence is that of Probable oligo-1,6-glucosidase 3 (yugT) from Bacillus subtilis (strain 168).